Reading from the N-terminus, the 853-residue chain is FIGNL1-interacting regulator of recombination and mitosis (853 aa).

Ser43 and Ser744 each carry phosphoserine; by PLK1. Lys792 bears the N6-acetyllysine mark.

Interacts (via its N-terminal region) with PLK1; controls PLK1 kinase activity. Interacts (via the KVVXF motif) with PPP1CC; controls PLK1 kinase activity. Interacts with FIGNL1; may regulate homologous recombination. Post-translationally, phosphorylation at Ser-43 by PLK1 strengthens FIRRM-PLK1 interaction. Phosphorylation at Ser-744 by PLK1 negatively regulates its interaction with PPP1CC.

It is found in the chromosome. Its subcellular location is the centromere. The protein localises to the kinetochore. It localises to the nucleus. The protein resides in the midbody. It is found in the cytoplasm. Its subcellular location is the cytoskeleton. The protein localises to the spindle. In terms of biological role, regulates PLK1 kinase activity at kinetochores and promotes faithful chromosome segregation in prometaphase by bridging kinase and phosphatase activities. Phosphorylation of FIRRM by PLK1 negatively regulates its interaction with the phosphatase, PPP1CC, thus creating a negative feedback loop for maintaining proper PLK1 kinase activity during mitosis. In complex with FIGL1 may regulate homologous recombination. The chain is FIGNL1-interacting regulator of recombination and mitosis from Homo sapiens (Human).